Consider the following 163-residue polypeptide: Nucleotide-binding protein YajQ (163 aa).

Belongs to the YajQ family.

In terms of biological role, nucleotide-binding protein. This Escherichia coli O81 (strain ED1a) protein is Nucleotide-binding protein YajQ.